We begin with the raw amino-acid sequence, 105 residues long: Ferredoxin-2 (105 aa).

The region spanning 4-94 (YQVEVIYQGQ…DLKIETHKED (91 aa)) is the 2Fe-2S ferredoxin-type domain. [2Fe-2S] cluster is bound by residues C40, C45, C48, and C78.

It belongs to the 2Fe2S plant-type ferredoxin family. In terms of assembly, forms a complex with heterodimeric ferredoxin-thioredoxin reductase (FTR) and thioredoxin. [2Fe-2S] cluster serves as cofactor.

In terms of biological role, ferredoxins are iron-sulfur proteins that transfer electrons in a wide variety of metabolic reactions. The chain is Ferredoxin-2 (petF2) from Synechococcus sp. (strain ATCC 27144 / PCC 6301 / SAUG 1402/1) (Anacystis nidulans).